The chain runs to 244 residues: Uridylate kinase (244 aa).

17 to 20 (KVSG) is a binding site for ATP. The tract at residues 25–30 (GEKGFG) is involved in allosteric activation by GTP. G59 is a UMP binding site. Positions 60 and 64 each coordinate ATP. UMP is bound by residues D80 and 141-148 (VGNPFFTT). T168, Q169, Y174, and D177 together coordinate ATP.

This sequence belongs to the UMP kinase family. In terms of assembly, homohexamer.

Its subcellular location is the cytoplasm. It carries out the reaction UMP + ATP = UDP + ADP. It functions in the pathway pyrimidine metabolism; CTP biosynthesis via de novo pathway; UDP from UMP (UMPK route): step 1/1. Its activity is regulated as follows. Allosterically activated by GTP. Inhibited by UTP. Functionally, catalyzes the reversible phosphorylation of UMP to UDP. This is Uridylate kinase from Ehrlichia canis (strain Jake).